The chain runs to 413 residues: Lamin tail domain-containing protein 1 (413 aa).

Disordered regions lie at residues 1–25 (MMKEASEPLASVTSINKQDSKVQDG) and 102–128 (HKDSSLGKQSTSSMVPRRQPQSSSDVD). Residues 107-128 (LGKQSTSSMVPRRQPQSSSDVD) show a composition bias toward polar residues. Residues 169–287 (EVGQFTSSSL…EAIAWYTPIH (119 aa)) form the LTD domain. The interval 356-413 (LPNKSPWCRNPNTSPHPYSSLIDSHDSDISESSLDTQLKPQPTKPKPDPGTKKKKAKS) is disordered. Positions 385-396 (SESSLDTQLKPQ) are enriched in low complexity.

It belongs to the intermediate filament family.

In Mus musculus (Mouse), this protein is Lamin tail domain-containing protein 1 (Lmntd1).